A 365-amino-acid chain; its full sequence is Endophilin-B1 (365 aa).

N-acetylmethionine is present on methionine 1. The tract at residues 1–30 (MNIMDFNVKKLAADAGTFLSRAVQFTEEKL) is membrane-binding amphipathic helix. Residues 1-37 (MNIMDFNVKKLAADAGTFLSRAVQFTEEKLGQAEKTE) form a required for membrane binding region. The region spanning 27–261 (EEKLGQAEKT…LGSFPSNYHS (235 aa)) is the BAR domain. The residue at position 145 (threonine 145) is a Phosphothreonine; by CDK5. A coiled-coil region spans residues 155 to 195 (YKTIAKERKLLQNKRLDLDAAKTRLKKAKAAETRASSEQEL). Residues 305–365 (GGSRRARVLY…VPITYLELLN (61 aa)) enclose the SH3 domain.

It belongs to the endophilin family. In terms of assembly, homodimer, and heterodimer with SH3GLB2. Binds BAX; induction of apoptosis augments BAX binding. Binds DNM1, HTT, AMPH, BIN1 and ARFGAP1. Interacts with UVRAG; UVRAG bridges the interaction to BECN1 indicative for an association with the PI3K complex II (PI3KC3-C2). Post-translationally, phosphorylated at Thr-145 by CDK5; this phosphorylation is required for autophagy induction in starved neurons and facilitates homodimerization.

The protein resides in the cytoplasm. It localises to the golgi apparatus membrane. It is found in the mitochondrion outer membrane. Its subcellular location is the cytoplasmic vesicle. The protein localises to the autophagosome membrane. The protein resides in the midbody. May be required for normal outer mitochondrial membrane dynamics. Required for coatomer-mediated retrograde transport in certain cells. May recruit other proteins to membranes with high curvature. May promote membrane fusion. Involved in activation of caspase-dependent apoptosis by promoting BAX/BAK1 activation. Involved in caspase-independent apoptosis during nutrition starvation and involved in the regulation of autophagy. Activates lipid kinase activity of PIK3C3 during autophagy probably by associating with the PI3K complex II (PI3KC3-C2). Associated with PI3KC3-C2 during autophagy may regulate the trafficking of ATG9A from the Golgi complex to the peripheral cytoplasm for the formation of autophagosomes by inducing Golgi membrane tubulation and fragmentation. Involved in regulation of degradative endocytic trafficking and cytokinesis, probably in the context of PI3KC3-C2. In Bos taurus (Bovine), this protein is Endophilin-B1 (SH3GLB1).